Reading from the N-terminus, the 165-residue chain is Chorismate pyruvate-lyase (165 aa).

Substrate is bound by residues Met-35, Arg-77, Leu-115, and Glu-156.

The protein belongs to the UbiC family. Monomer.

The protein localises to the cytoplasm. The catalysed reaction is chorismate = 4-hydroxybenzoate + pyruvate. Its pathway is cofactor biosynthesis; ubiquinone biosynthesis. Its function is as follows. Removes the pyruvyl group from chorismate, with concomitant aromatization of the ring, to provide 4-hydroxybenzoate (4HB) for the ubiquinone pathway. This is Chorismate pyruvate-lyase from Shigella dysenteriae serotype 1 (strain Sd197).